The sequence spans 308 residues: Endonuclease G, mitochondrial (308 aa).

H148 acts as the Proton acceptor in catalysis. Residue N180 participates in Mg(2+) binding.

Belongs to the DNA/RNA non-specific endonuclease family. As to quaternary structure, homodimer; disulfide-linked. Interacts with crn-5, crn-4, crn-1 and cyn-13. The cofactor is Mg(2+).

It localises to the mitochondrion. Endonuclease important for programmed cell death; it mediates apoptotic DNA fragmentation. This is Endonuclease G, mitochondrial (cps-6) from Caenorhabditis elegans.